The primary structure comprises 192 residues: Ion-translocating oxidoreductase complex subunit A (192 aa).

6 consecutive transmembrane segments (helical) span residues 5 to 25 (LLLL…FLGL), 39 to 59 (IGMS…SYLV), 65 to 85 (LPFD…AVVV), 102 to 122 (ALGI…VALL), 134 to 154 (AIFG…FSAM), and 171 to 191 (AIAM…TGLV).

It belongs to the NqrDE/RnfAE family. The complex is composed of six subunits: RnfA, RnfB, RnfC, RnfD, RnfE and RnfG.

The protein resides in the cell inner membrane. Functionally, part of a membrane-bound complex that couples electron transfer with translocation of ions across the membrane. This Shewanella pealeana (strain ATCC 700345 / ANG-SQ1) protein is Ion-translocating oxidoreductase complex subunit A.